The primary structure comprises 80 residues: Delta-actitoxin-Amc2a (80 aa).

A signal peptide spans 1-19; it reads MNKVLFLCLVVLCATSAFA. The propeptide occupies 20-30; sequence AEEEYVERAPV. 3 cysteine pairs are disulfide-bonded: cysteine 37/cysteine 73, cysteine 39/cysteine 65, and cysteine 55/cysteine 74. Proline 56 is modified (hydroxyproline).

The protein belongs to the sea anemone type 3 (BDS) potassium channel toxin family.

The protein localises to the secreted. The protein resides in the nematocyst. In terms of biological role, neurotoxon that induces paralysis when injected into crabs. This is Delta-actitoxin-Amc2a from Antheopsis maculata (Sea anemone).